The primary structure comprises 139 residues: uncharacterized protein (139 aa).

The protein to S.typhimurium FliF.

Functionally, may be involved in the assembly, structure, or function of the flagellum. May polymerize to form a filamentous structure that is part of the flagellum. This is an uncharacterized protein from Bacillus subtilis (strain 168).